We begin with the raw amino-acid sequence, 706 residues long: Coiled-coil domain-containing protein 177 (706 aa).

Acidic residues predominate over residues 1-11 (MVDPVPEEEKE). 3 disordered regions span residues 1–63 (MVDP…GGRR), 179–262 (ASAL…LREL), and 268–287 (ASARNSCPAGSASSAPNPLG). Composition is skewed to low complexity over residues 28–49 (PPDAQGAQQPAASSASASAAAP) and 179–209 (ASALSGGSSSSCSSSSSLPASPASRVARRTS). The segment covering 210–221 (PSPPARSRPPPA) has biased composition (pro residues). Residues 242 to 257 (ALSSESGASSSSYSGE) show a composition bias toward low complexity. Serine 310 bears the Phosphoserine mark. Positions 360-624 (AAHGQWEQQR…QTRLEKERAQ (265 aa)) form a coiled coil. Disordered regions lie at residues 364–386 (QWEQQRVRAEQRREREEREKQRA), 398–425 (VEERRGRRGREEREAARRRQQQCERSEE), 448–580 (DDRL…EREH), and 651–706 (ERSE…LDRK). The segment covering 368–386 (QRVRAEQRREREEREKQRA) has biased composition (basic and acidic residues). Basic and acidic residues-rich tracts occupy residues 448–529 (DDRL…REGL), 548–580 (QEQRARELRERARREELQGRRAKEAAERKEREH), and 651–663 (ERSEQLSRERRSA). A compositionally biased stretch (low complexity) spans 664–674 (LESARSTARAS). Residues 676-706 (HVREKVREETNTRSFDRMVREAQLHASLDRK) show a composition bias toward basic and acidic residues.

This is Coiled-coil domain-containing protein 177 (Ccdc177) from Mus musculus (Mouse).